A 65-amino-acid chain; its full sequence is Large ribosomal subunit protein bL32 (65 aa).

The disordered stretch occupies residues 1 to 45 (MAVQQNKKTPSKRGMRRAHDVLKKPTFSVDFSSGETHRRHHVTPD).

The protein belongs to the bacterial ribosomal protein bL32 family.

This Nitrosococcus oceani (strain ATCC 19707 / BCRC 17464 / JCM 30415 / NCIMB 11848 / C-107) protein is Large ribosomal subunit protein bL32.